We begin with the raw amino-acid sequence, 60 residues long: Metallothionein A (60 aa).

The segment at 1-28 is beta; sequence MDPCECSKSGTCNCGGSCTCTNCSCKSC. 20 residues coordinate a divalent metal cation: cysteine 4, cysteine 6, cysteine 12, cysteine 14, cysteine 18, cysteine 20, cysteine 23, cysteine 25, cysteine 28, cysteine 32, cysteine 33, cysteine 35, cysteine 36, cysteine 40, cysteine 43, cysteine 47, cysteine 49, cysteine 54, cysteine 58, and cysteine 59. Residues 29-60 are alpha; the sequence is KKSCCPCCPSGCTKCASGCVCKGKTCDTSCCQ.

This sequence belongs to the metallothionein superfamily. Type 1 family.

Metallothioneins have a high content of cysteine residues that bind various heavy metals. This Chionodraco rastrospinosus (Ocellated icefish) protein is Metallothionein A (mta).